An 86-amino-acid polypeptide reads, in one-letter code: BolA-like protein 2 (86 aa).

An N-acetylmethionine modification is found at M1.

The protein belongs to the BolA/IbaG family. In terms of assembly, interacts with GLRX3; forms a heterotrimeric complex composed by two BOLA2 molecules and one GLRX3 molecule; linked by [2Fe-2S] clusters.

Its subcellular location is the cytoplasm. The protein localises to the nucleus. Its function is as follows. Acts as a cytosolic iron-sulfur (Fe-S) cluster assembly factor that facilitates [2Fe-2S] cluster insertion into a subset of cytosolic proteins. Acts together with the monothiol glutaredoxin GLRX3. The sequence is that of BolA-like protein 2 (BOLA2) from Homo sapiens (Human).